A 339-amino-acid chain; its full sequence is Protein RecA (339 aa).

74 to 81 (GPESSGKT) serves as a coordination point for ATP.

The protein belongs to the RecA family.

The protein localises to the cytoplasm. In terms of biological role, can catalyze the hydrolysis of ATP in the presence of single-stranded DNA, the ATP-dependent uptake of single-stranded DNA by duplex DNA, and the ATP-dependent hybridization of homologous single-stranded DNAs. It interacts with LexA causing its activation and leading to its autocatalytic cleavage. The polypeptide is Protein RecA (Phytoplasma mali (strain AT)).